The chain runs to 149 residues: Myoglobin (149 aa).

At threonine 2 the chain carries N-acetylthreonine. The 142-residue stretch at 2-143 (TEWEHVNKVW…ICSDLETLYK (142 aa)) folds into the Globin domain. Histidine 60 is a binding site for nitrite. An O2-binding site is contributed by histidine 60. Histidine 89 contributes to the heme b binding site.

Belongs to the globin family. Monomeric.

The protein resides in the cytoplasm. It localises to the sarcoplasm. The catalysed reaction is Fe(III)-heme b-[protein] + nitric oxide + H2O = Fe(II)-heme b-[protein] + nitrite + 2 H(+). It catalyses the reaction H2O2 + AH2 = A + 2 H2O. Functionally, monomeric heme protein which primary function is to store oxygen and facilitate its diffusion within muscle tissues. Reversibly binds oxygen through a pentacoordinated heme iron and enables its timely and efficient release as needed during periods of heightened demand. Depending on the oxidative conditions of tissues and cells, and in addition to its ability to bind oxygen, it also has a nitrite reductase activity whereby it regulates the production of bioactive nitric oxide. Under stress conditions, like hypoxia and anoxia, it also protects cells against reactive oxygen species thanks to its pseudoperoxidase activity. In Heterodontus portusjacksoni (Port Jackson shark), this protein is Myoglobin (mb).